A 263-amino-acid chain; its full sequence is Small ribosomal subunit protein uS3 (263 aa).

In terms of domain architecture, KH type-2 spans 40 to 108; that stretch reads IRNYLFKKFH…HIKVDVDVLE (69 aa). The segment at 224–263 is disordered; that stretch reads KPKGSEANHQRRNSNKSKDYRDNKNKQFNKNHQNQQPAKE. Over residues 239 to 248 the composition is skewed to basic and acidic residues; the sequence is KSKDYRDNKN. The segment covering 249–263 has biased composition (low complexity); it reads KQFNKNHQNQQPAKE.

This sequence belongs to the universal ribosomal protein uS3 family. As to quaternary structure, part of the 30S ribosomal subunit. Forms a tight complex with proteins S10 and S14.

In terms of biological role, binds the lower part of the 30S subunit head. Binds mRNA in the 70S ribosome, positioning it for translation. The sequence is that of Small ribosomal subunit protein uS3 from Mycoplasmoides gallisepticum (strain R(low / passage 15 / clone 2)) (Mycoplasma gallisepticum).